The primary structure comprises 107 residues: Integration host factor subunit alpha (107 aa).

It belongs to the bacterial histone-like protein family. As to quaternary structure, heterodimer of an alpha and a beta chain.

In terms of biological role, this protein is one of the two subunits of integration host factor, a specific DNA-binding protein that functions in genetic recombination as well as in transcriptional and translational control. The chain is Integration host factor subunit alpha from Brucella abortus (strain S19).